We begin with the raw amino-acid sequence, 87 residues long: Olfactory receptor-like protein HbT2 (87 aa).

Topologically, residues 1–8 (KLWRMTGT) are cytoplasmic. A helical membrane pass occupies residues 9-29 (WLGGFCHSIIQIPVIIQLPFC). The Extracellular segment spans residues 30–55 (GPNVIDHYFRDLQPLFKLACTDTFME). A helical membrane pass occupies residues 56-76 (GVIVLAFSGLFSVFSFLILVS). At 77–87 (SYIVILVNLRN) the chain is on the cytoplasmic side.

This sequence belongs to the G-protein coupled receptor 1 family.

It is found in the cell membrane. In terms of biological role, odorant receptor. The chain is Olfactory receptor-like protein HbT2 from Apis mellifera ligustica (Common honeybee).